The following is a 116-amino-acid chain: Large ribosomal subunit protein uL18 (116 aa).

This sequence belongs to the universal ribosomal protein uL18 family. In terms of assembly, part of the 50S ribosomal subunit; part of the 5S rRNA/L5/L18/L25 subcomplex. Contacts the 5S and 23S rRNAs.

Functionally, this is one of the proteins that bind and probably mediate the attachment of the 5S RNA into the large ribosomal subunit, where it forms part of the central protuberance. The polypeptide is Large ribosomal subunit protein uL18 (Shewanella piezotolerans (strain WP3 / JCM 13877)).